We begin with the raw amino-acid sequence, 346 residues long: Peripherin-2 (346 aa).

The Cytoplasmic portion of the chain corresponds to 1-24; that stretch reads MALMKTKFNLKRRVKLAQGLWLMN. The helical transmembrane segment at 25 to 43 threads the bilayer; the sequence is WCCVLAGIALFSMGVFLKI. Residues 44–61 are Lumenal-facing; that stretch reads ELRKRSEVMDNDESHFVP. The helical transmembrane segment at 62–80 threads the bilayer; the sequence is NSLILMGSLACALNAFPGK. The Cytoplasmic segment spans residues 81 to 99; it reads ICYDSLDPTKFPRWKPMLK. Residues 100-123 traverse the membrane as a helical segment; that stretch reads PYLIICLIFNIFIFFTGVVCFLTR. Topologically, residues 124–264 are lumenal; the sequence is GSLESTLAHG…LNYYTSMMSS (141 aa). The N-linked (GlcNAc...) asparagine glycan is linked to N229. A helical transmembrane segment spans residues 265-290; sequence MGGMVFLVWIMEMAVMIGLRFLHTCL. Residues 291–346 are Cytoplasmic-facing; the sequence is ETIANPEDPECESEGWILEKSLKDTIKSSWELVKSMGKLNKVETAGGEEAGVATVS.

The protein belongs to the PRPH2/ROM1 family. As to quaternary structure, homodimer; disulfide-linked. In terms of tissue distribution, found in both rod and cone photoreceptors. Specifically in the rims and incisures of rod and cone outer segment disks.

Its subcellular location is the membrane. Its function is as follows. May be involved in the morphogenesis of retina outer segment disks and the development and maintenance of the retina ultrastructure. The polypeptide is Peripherin-2 (prph2) (Xenopus laevis (African clawed frog)).